Consider the following 323-residue polypeptide: Sphingolipid delta(4)-desaturase DES1 (323 aa).

2 helical membrane-spanning segments follow: residues histidine 41–valine 61 and tryptophan 68–isoleucine 88. A Histidine box-1 motif is present at residues histidine 89–histidine 93. The chain crosses the membrane as a helical span at residues tryptophan 104–phenylalanine 124. The Histidine box-2 motif lies at histidine 128–histidine 132. 3 consecutive transmembrane segments (helical) span residues phenylalanine 152–isoleucine 172, leucine 185–glycine 205, and phenylalanine 210–isoleucine 230. Positions histidine 259 to histidine 263 match the Histidine box-3 motif.

Belongs to the fatty acid desaturase type 1 family. DEGS subfamily. Interacts with RLBP1; the interaction increases synthesis of chromophore-precursors by DEGS1.

Its subcellular location is the endoplasmic reticulum membrane. It catalyses the reaction an N-acylsphinganine + 2 Fe(II)-[cytochrome b5] + O2 + 2 H(+) = an N-acylsphing-4-enine + 2 Fe(III)-[cytochrome b5] + 2 H2O. It carries out the reaction all-trans-retinol = 11-cis-retinol. The enzyme catalyses all-trans-retinol = 9-cis-retinol. The catalysed reaction is all-trans-retinol = 13-cis-retinol. It catalyses the reaction 11-cis-retinol = 13-cis-retinol. It carries out the reaction 11-cis-retinol = 9-cis-retinol. Its function is as follows. Has sphingolipid-delta-4-desaturase activity. Converts D-erythro-sphinganine to D-erythro-sphingosine (E-sphing-4-enine). Catalyzes the equilibrium isomerization of retinols. This is Sphingolipid delta(4)-desaturase DES1 (degs1) from Xenopus tropicalis (Western clawed frog).